A 465-amino-acid chain; its full sequence is Purple acid phosphatase 2 (465 aa).

A signal peptide spans 1-32; that stretch reads MGASRTGCYLLAVVLAAVMNAAIAGITSSFIR. Asn110 and Asn138 each carry an N-linked (GlcNAc...) asparagine glycan. Asp164 is a binding site for Fe cation. A glycan (N-linked (GlcNAc...) asparagine) is linked at Asn172. Asp193 and Tyr196 together coordinate Fe cation. Asp193 serves as a coordination point for Mn(2+). Position 230 (Asn230) interacts with Mn(2+). Substrate is bound at residue Asn230. Asn303 carries an N-linked (GlcNAc...) asparagine glycan. His315 provides a ligand contact to Mn(2+). His325 serves as the catalytic Proton donor. Position 352 (His352) interacts with Mn(2+). 352–354 serves as a coordination point for substrate; the sequence is HVH. His354 contributes to the Fe cation binding site. 2 N-linked (GlcNAc...) asparagine glycosylation sites follow: Asn400 and Asn425.

It belongs to the metallophosphoesterase superfamily. Purple acid phosphatase family. Homodimer; disulfide-linked. Fe cation serves as cofactor. The cofactor is Mn(2+). It depends on Zn(2+) as a cofactor. Requires Cu(2+) as cofactor. Mg(2+) is required as a cofactor.

The protein resides in the secreted. It catalyses the reaction a phosphate monoester + H2O = an alcohol + phosphate. This Ipomoea batatas (Sweet potato) protein is Purple acid phosphatase 2 (PAP2).